The primary structure comprises 119 residues: MARVKGGVVSRKRRKRVLKLAKGYYGAKHILFRTAKEQVMNSYYYAYRDRRQKKRDFRKLWITRINAAARMNGLSYSQLMHGLKLAEIEVNRKMLADLAVNDAAAFTALADAAKAKLGK.

The protein belongs to the bacterial ribosomal protein bL20 family.

Functionally, binds directly to 23S ribosomal RNA and is necessary for the in vitro assembly process of the 50S ribosomal subunit. It is not involved in the protein synthesizing functions of that subunit. This chain is Large ribosomal subunit protein bL20, found in Streptococcus agalactiae serotype Ia (strain ATCC 27591 / A909 / CDC SS700).